A 656-amino-acid chain; its full sequence is Tetratricopeptide repeat protein 30 homolog (656 aa).

TPR repeat units follow at residues glutamate 9–asparagine 42, leucine 43–tyrosine 76, alanine 141–glutamine 174, glycine 176–aspartate 208, isoleucine 238–aspartate 271, arginine 378–leucine 412, leucine 416–histidine 449, threonine 451–aspartate 484, and serine 537–lysine 570.

It belongs to the TTC30/dfy-1/fleer family. Component of the IFT complex B composed of at least che-2, che-13, dyf-1, dyf-3, dyf-6, dyf-11, dyf-13, ift-20, ift-74, ift-81, ifta-2, osm-1, osm-5 and osm-6. Expressed in most amphid, both phasmid and several labial-quadrant neurons.

It localises to the cell projection. The protein resides in the cilium. Functionally, plays a role in anterograde intraflagellar transport (IFT), the process by which cilia precursors are transported from the base of the cilium to the site of their incorporation at the tip. Specifically required for the kinesin osm-3 to dock onto and move the IFT particles which contain these precursors. Component of the intraflagellar transport (IFT) complex B required for transport of proteins in the motile cilium. May be required for ciliary entrance and transport of specific ciliary cargo proteins such as che-3 which are related to motility. Required for polyglutamylation of axonemal tubulin in sensory cilia. This chain is Tetratricopeptide repeat protein 30 homolog, found in Caenorhabditis elegans.